The following is a 660-amino-acid chain: Polyadenylation factor subunit 2 (660 aa).

The span at 1 to 12 shows a compositional bias: basic and acidic residues; the sequence is MSYEPRGDHDKG. Positions 1 to 32 are disordered; sequence MSYEPRGDHDKGYGGGGGHDGLPPRNRGRRPV. WD repeat units lie at residues 94–133, 136–176, 177–216, 219–258, 261–301, 304–344, and 376–415; these read KIKHPINVVRWTPEGRRLLTASSSGEFTLWNGTGFNFETI, AHDS…ESIR, GHTDPIRDLAFSPNDTKFVTASDDQTLKVFDFAGGSTDMT, GHGWDAKSCDWHPSRGLIVSGSKDHLVKLWDPRTGRCLTT, GHKN…DIAL, GHEK…TAPD, and AHDFAIWSLDWHPLGHILASGSNDRITRFWSRARPGEAPE. Residues 562–660 form a disordered region; it reads KAGYQPPPPP…QSKGNYTRVR (99 aa). A compositionally biased stretch (pro residues) spans 566–610; it reads QPPPPPGSAGAPMPPPGILPPGLIPPPGAAGFPMPPPGFAPPPLI.

It localises to the nucleus. Required for 3'-end cleavage and polyadenylation of pre-mRNAs. Also involved in chromosome segregation where it has a role in chromosome attachment to the mitotic spindle. This Neurospora crassa (strain ATCC 24698 / 74-OR23-1A / CBS 708.71 / DSM 1257 / FGSC 987) protein is Polyadenylation factor subunit 2 (paa-1).